Here is a 304-residue protein sequence, read N- to C-terminus: Large ribosomal subunit protein uL18y (304 aa).

It belongs to the universal ribosomal protein uL18 family. In terms of assembly, component of the large ribosomal subunit (LSU).

It localises to the cytoplasm. The protein resides in the nucleus. Functionally, component of the ribosome, a large ribonucleoprotein complex responsible for the synthesis of proteins in the cell. The small ribosomal subunit (SSU) binds messenger RNAs (mRNAs) and translates the encoded message by selecting cognate aminoacyl-transfer RNA (tRNA) molecules. The large subunit (LSU) contains the ribosomal catalytic site termed the peptidyl transferase center (PTC), which catalyzes the formation of peptide bonds, thereby polymerizing the amino acids delivered by tRNAs into a polypeptide chain. The nascent polypeptides leave the ribosome through a tunnel in the LSU and interact with protein factors that function in enzymatic processing, targeting, and the membrane insertion of nascent chains at the exit of the ribosomal tunnel. The chain is Large ribosomal subunit protein uL18y (RPL5B) from Oryza sativa subsp. japonica (Rice).